Here is a 463-residue protein sequence, read N- to C-terminus: MSQALSPAKTPKIGFVSLGCPKNLTDSELLLTQLSAEGYETSKTFEGADLVIVNTCGFIDEAVKESLDTIGEALAENGKVIVTGCLGARAGETGGNLVKEVHPSVLAVTGPHAAQEVMEVVHTHCPKPHDPFLDLVPGGFGEAGIKLTPRHYAYLKISEGCNHRCTFCIIPSMRGDLVSRPVGDVLKEAKALFEGGVKELLVISQDTSAYGVDVKYRTGFWDGKPVKTRTLELVQKLGEMAATYGAWVRLHYVYPYPSVDDIIPLMAQGLVLPYLDVPFQHSHPDVLKRMKRPASGEKNLERILRWREACPEIVIRSTFIAGFPGETEEEFQHLLDFVREAQIDRAGCFAYSDVEGAAANELPGMLPMELREERRARFMAVAEEVSTAKLQRRVGQTMQVLVDQAVGLGKKGGVGRSYADAPEIDGVVHLLPPEKFSKTYKVGDFVKARIVGTQGHDLVGVPV.

The MTTase N-terminal domain occupies P11 to P126. 6 residues coordinate [4Fe-4S] cluster: C20, C56, C85, C161, C165, and C168. Residues L147–A388 enclose the Radical SAM core domain. The TRAM domain maps to Q391–V463.

The protein belongs to the methylthiotransferase family. RimO subfamily. Requires [4Fe-4S] cluster as cofactor.

Its subcellular location is the cytoplasm. The enzyme catalyses L-aspartate(89)-[ribosomal protein uS12]-hydrogen + (sulfur carrier)-SH + AH2 + 2 S-adenosyl-L-methionine = 3-methylsulfanyl-L-aspartate(89)-[ribosomal protein uS12]-hydrogen + (sulfur carrier)-H + 5'-deoxyadenosine + L-methionine + A + S-adenosyl-L-homocysteine + 2 H(+). In terms of biological role, catalyzes the methylthiolation of an aspartic acid residue of ribosomal protein uS12. The sequence is that of Ribosomal protein uS12 methylthiotransferase RimO from Acidovorax sp. (strain JS42).